The sequence spans 437 residues: Xylose isomerase (437 aa).

Catalysis depends on residues His-101 and Asp-104. Positions 232, 268, 271, 296, 307, 309, and 339 each coordinate Mg(2+).

Belongs to the xylose isomerase family. In terms of assembly, homotetramer. Requires Mg(2+) as cofactor.

The protein resides in the cytoplasm. It carries out the reaction alpha-D-xylose = alpha-D-xylulofuranose. In Actinobacillus succinogenes (strain ATCC 55618 / DSM 22257 / CCUG 43843 / 130Z), this protein is Xylose isomerase.